A 164-amino-acid polypeptide reads, in one-letter code: MALNLQDKKAIVAEVNEAANGALSAVVADSRGVAVGAMTSLRKQARENGVYLKVVRNTLARRAVEGTDFECLKDVFVGPSLIGFSNEHPGAAARLFKDFAKENKDFEFKAAAFEGAVVDAEVLATLPTYDEAIARLMMCMKEASAGKLVRTIAAVRDQKEEAAA.

Belongs to the universal ribosomal protein uL10 family. As to quaternary structure, part of the ribosomal stalk of the 50S ribosomal subunit. The N-terminus interacts with L11 and the large rRNA to form the base of the stalk. The C-terminus forms an elongated spine to which L12 dimers bind in a sequential fashion forming a multimeric L10(L12)X complex.

Functionally, forms part of the ribosomal stalk, playing a central role in the interaction of the ribosome with GTP-bound translation factors. The polypeptide is Large ribosomal subunit protein uL10 (Photobacterium profundum (strain SS9)).